Reading from the N-terminus, the 320-residue chain is tRNA dimethylallyltransferase (320 aa).

Residue 17–24 (GPTAVGKT) coordinates ATP. Residue 19-24 (TAVGKT) coordinates substrate. An interaction with substrate tRNA region spans residues 42–45 (DSMQ).

It belongs to the IPP transferase family. In terms of assembly, monomer. Requires Mg(2+) as cofactor.

It carries out the reaction adenosine(37) in tRNA + dimethylallyl diphosphate = N(6)-dimethylallyladenosine(37) in tRNA + diphosphate. Functionally, catalyzes the transfer of a dimethylallyl group onto the adenine at position 37 in tRNAs that read codons beginning with uridine, leading to the formation of N6-(dimethylallyl)adenosine (i(6)A). This chain is tRNA dimethylallyltransferase, found in Bacillus thuringiensis (strain Al Hakam).